We begin with the raw amino-acid sequence, 227 residues long: UPF0173 metal-dependent hydrolase Saci_1512 (227 aa).

It belongs to the UPF0173 family.

This chain is UPF0173 metal-dependent hydrolase Saci_1512, found in Sulfolobus acidocaldarius (strain ATCC 33909 / DSM 639 / JCM 8929 / NBRC 15157 / NCIMB 11770).